A 271-amino-acid chain; its full sequence is S-adenosylmethionine decarboxylase proenzyme (271 aa).

The active-site Schiff-base intermediate with substrate; via pyruvic acid is Ser-121. Position 121 is a pyruvic acid (Ser); by autocatalysis (Ser-121). His-126 (proton acceptor; for processing activity) is an active-site residue. Cys-149 acts as the Proton donor; for catalytic activity in catalysis.

The protein belongs to the prokaryotic AdoMetDC family. Type 2 subfamily. In terms of assembly, heterooctamer of four alpha and four beta chains arranged as a tetramer of alpha/beta heterodimers. The cofactor is pyruvate. In terms of processing, is synthesized initially as an inactive proenzyme. Formation of the active enzyme involves a self-maturation process in which the active site pyruvoyl group is generated from an internal serine residue via an autocatalytic post-translational modification. Two non-identical subunits are generated from the proenzyme in this reaction, and the pyruvate is formed at the N-terminus of the alpha chain, which is derived from the carboxyl end of the proenzyme. The post-translation cleavage follows an unusual pathway, termed non-hydrolytic serinolysis, in which the side chain hydroxyl group of the serine supplies its oxygen atom to form the C-terminus of the beta chain, while the remainder of the serine residue undergoes an oxidative deamination to produce ammonia and the pyruvoyl group blocking the N-terminus of the alpha chain.

It carries out the reaction S-adenosyl-L-methionine + H(+) = S-adenosyl 3-(methylsulfanyl)propylamine + CO2. The protein operates within amine and polyamine biosynthesis; S-adenosylmethioninamine biosynthesis; S-adenosylmethioninamine from S-adenosyl-L-methionine: step 1/1. Functionally, catalyzes the decarboxylation of S-adenosylmethionine to S-adenosylmethioninamine (dcAdoMet), the propylamine donor required for the synthesis of the polyamines spermine and spermidine from the diamine putrescine. The chain is S-adenosylmethionine decarboxylase proenzyme from Clostridium perfringens (strain ATCC 13124 / DSM 756 / JCM 1290 / NCIMB 6125 / NCTC 8237 / Type A).